A 400-amino-acid polypeptide reads, in one-letter code: Small ribosomal subunit protein bS1 (400 aa).

S1 motif domains lie at 17–87 (GDVV…VTYL), 107–173 (EEVV…LSRR), 194–262 (GDVV…LSLK), and 279–348 (GDVV…LSIK). The segment covering 351–366 (EERPAQEEGQKEEKRA) has biased composition (basic and acidic residues). The tract at residues 351–400 (EERPAQEEGQKEEKRAARPRRPRRQEKRDFELPETQTGFSMADLFGDIEL) is disordered.

This sequence belongs to the bacterial ribosomal protein bS1 family. Post-translationally, phosphorylated.

In terms of biological role, binds mRNA; thus facilitating recognition of the initiation point. It is needed to translate mRNA with a short Shine-Dalgarno (SD) purine-rich sequence. The sequence is that of Small ribosomal subunit protein bS1 (rpsA) from Streptococcus pneumoniae (strain ATCC BAA-255 / R6).